A 720-amino-acid polypeptide reads, in one-letter code: DNA replication licensing factor mcm7-A (720 aa).

The C4-type zinc finger occupies 183–210; that stretch reads CDQCGAETYQPIQSPTFMPLIMCPSREC. In terms of domain architecture, MCM spans 331-537; the sequence is FYEKLAASIA…NDLRLAQHIT (207 aa). ATP is bound by residues tyrosine 344, glycine 383, alanine 385, lysine 386, serine 387, asparagine 488, arginine 513, and arginine 603. The Arginine finger motif lies at 512-515; the sequence is SRFD.

It belongs to the MCM family. As to quaternary structure, component of the mcm2-7 complex (RLF-M). The complex forms a toroidal hexameric ring with the proposed subunit order mcm2-mcm6-mcm4-mcm7-mcm3-mcm5. The heterodimer of mmcm3/mcm5 interacts with mcm4, mmcm6, mcm7 and weakly with mcm2. The N-terminus is required for interaction with mmcm3, though this interaction may not be direct, and remains in a complex with mmcm3 throughout the cell cycle. Begins to associate with zmcm6 at the neurula stage. Component of the replisome complex. Component of the CMG helicase complex, composed of the mcm2-7 complex, the GINS complex and cdc45. Ubiquitinated by traip when forks converge following formation of DNA interstrand cross-links. Ubiquitinated via 'Lys-6'- and 'Lys-63'-linked polyubiquitination by traip. Short ubiquitin chains on mcm7 promote recruitment of DNA glycosylase neil3. If the interstrand cross-link cannot be cleaved by neil3, the ubiquitin chains continue to grow on mcm7, promoting the unloading of the CMG helicase complex by the vcp/p97 ATPase.

It is found in the nucleus. The protein resides in the chromosome. The enzyme catalyses ATP + H2O = ADP + phosphate + H(+). Acts as a component of the mcm2-7 complex (mcm complex) which is the putative replicative helicase essential for 'once per cell cycle' DNA replication initiation and elongation in eukaryotic cells. The active ATPase sites in the mcm2-7 ring are formed through the interaction surfaces of two neighboring subunits such that a critical structure of a conserved arginine finger motif is provided in trans relative to the ATP-binding site of the Walker A box of the adjacent subunit. The six ATPase active sites, however, are likely to contribute differentially to the complex helicase activity. The existence of maternal and zygotic forms of mcm3 and mcm6 suggests that specific forms of mcm2-7 complexes may be used during different stages of development. This is DNA replication licensing factor mcm7-A (mcm7-a) from Xenopus laevis (African clawed frog).